The following is a 331-amino-acid chain: Serine/threonine-protein phosphatase PP1 isozyme 7 (331 aa).

The residue at position 1 (methionine 1) is an N-acetylmethionine. The Mn(2+) site is built by aspartate 60, histidine 62, aspartate 88, and asparagine 120. Histidine 121 serves as the catalytic Proton donor. The Mn(2+) site is built by histidine 169 and histidine 244.

The protein belongs to the PPP phosphatase family. PP-1 subfamily. It depends on Mn(2+) as a cofactor. Expressed in roots, rosettes and flowers.

Its subcellular location is the nucleus. The protein resides in the cytoplasm. It carries out the reaction O-phospho-L-seryl-[protein] + H2O = L-seryl-[protein] + phosphate. The enzyme catalyses O-phospho-L-threonyl-[protein] + H2O = L-threonyl-[protein] + phosphate. With respect to regulation, phosphatase activity is strongly reduced by the protein phosphatase inhibitor 2 (I-2). Serine/threonine-protein phosphatase that possesses phosphatase activity toward para-nitrophenyl phosphate (pNPP) in vitro. The sequence is that of Serine/threonine-protein phosphatase PP1 isozyme 7 from Arabidopsis thaliana (Mouse-ear cress).